The sequence spans 1052 residues: ATP-dependent DNA helicase MPH1 (1052 aa).

The Helicase ATP-binding domain occupies 89–256; the sequence is IVRKGLLQNI…EVVNNLNISK (168 aa). Residue 102-109 participates in ATP binding; sequence IPTGMGKT. Residues 204 to 207 carry the DEAH box motif; the sequence is DEAH. Residues 432-649 enclose the Helicase C-terminal domain; the sequence is ELTQFFYENP…HLVQYRKSDR (218 aa). Disordered stretches follow at residues 495–550, 798–832, 869–898, and 1002–1052; these read HGPK…NQKQ, IGDTRNKAKASSSMKVKKEPTMAVDHSDDEEDLPL, SKRQRLQPEVQPEVQPEVQPEVQPEVQPEV, and HTVS…DSDF. The span at 503-532 shows a compositional bias: basic and acidic residues; it reads SDREKRLEEERRMDEEKKQAALQEKLERTS. The span at 534–549 shows a compositional bias: polar residues; the sequence is RTGSSEEAQLSGMNQK. 2 stretches are compositionally biased toward low complexity: residues 875–898 and 1005–1028; these read QPEVQPEVQPEVQPEVQPEVQPEV and SQSQGQSNSQSQAHSTSQKSQQAS. The segment covering 1029 to 1040 has biased composition (basic and acidic residues); sequence QKDRSSQDKDLT. Positions 1043 to 1052 are enriched in acidic residues; it reads ELEDLLDSDF.

Belongs to the DEAD box helicase family. DEAH subfamily. FANCM sub-subfamily. In terms of assembly, interacts with the MHF histone-fold complex to form the FANCM-MHF complex.

The protein localises to the nucleus. The enzyme catalyses ATP + H2O = ADP + phosphate + H(+). In terms of biological role, ATP-dependent DNA helicase involved in DNA damage repair by homologous recombination and in genome maintenance. Capable of unwinding D-loops. Plays a role in limiting crossover recombinants during mitotic DNA double-strand break (DSB) repair. Component of a FANCM-MHF complex which promotes gene conversion at blocked replication forks, probably by reversal of the stalled fork. The sequence is that of ATP-dependent DNA helicase MPH1 from Candida glabrata (strain ATCC 2001 / BCRC 20586 / JCM 3761 / NBRC 0622 / NRRL Y-65 / CBS 138) (Yeast).